We begin with the raw amino-acid sequence, 696 residues long: UvrABC system protein B (696 aa).

Positions 46 to 433 constitute a Helicase ATP-binding domain; that stretch reads EGVEDGLSFQ…SGQTAEQVVR (388 aa). Position 59-66 (59-66) interacts with ATP; the sequence is GVTGSGKT. The short motif at 112-135 is the Beta-hairpin element; the sequence is YYDYYQPEAYVPQRDLFIEKDSSI. The Helicase C-terminal domain maps to 450–616; sequence QVDDVLSEIT…GVVKRIKDII (167 aa). Positions 647-682 constitute a UVR domain; sequence AKEIKRLEKQMADYAKNLEFEKAAQTRDQLALLRER.

It belongs to the UvrB family. As to quaternary structure, forms a heterotetramer with UvrA during the search for lesions. Interacts with UvrC in an incision complex.

It localises to the cytoplasm. In terms of biological role, the UvrABC repair system catalyzes the recognition and processing of DNA lesions. A damage recognition complex composed of 2 UvrA and 2 UvrB subunits scans DNA for abnormalities. Upon binding of the UvrA(2)B(2) complex to a putative damaged site, the DNA wraps around one UvrB monomer. DNA wrap is dependent on ATP binding by UvrB and probably causes local melting of the DNA helix, facilitating insertion of UvrB beta-hairpin between the DNA strands. Then UvrB probes one DNA strand for the presence of a lesion. If a lesion is found the UvrA subunits dissociate and the UvrB-DNA preincision complex is formed. This complex is subsequently bound by UvrC and the second UvrB is released. If no lesion is found, the DNA wraps around the other UvrB subunit that will check the other stand for damage. The chain is UvrABC system protein B from Burkholderia mallei (strain ATCC 23344).